Reading from the N-terminus, the 1042-residue chain is Kinesin-like protein KIN-5A (1042 aa).

A compositionally biased stretch (low complexity) spans Met1–Ser14. The tract at residues Met1 to Lys45 is disordered. Residues Ser21–Val31 are compositionally biased toward basic and acidic residues. A compositionally biased stretch (polar residues) spans Asp32–Ser41. Residues Asn50–Ile392 enclose the Kinesin motor domain. Gly136 to Thr143 provides a ligand contact to ATP. Residues Thr480–Glu517 are a coiled coil. The tract at residues Lys1021–Asn1042 is disordered.

Belongs to the TRAFAC class myosin-kinesin ATPase superfamily. Kinesin family. KIN-5/BimC subfamily.

It is found in the cytoplasm. It localises to the cytoskeleton. The protein resides in the spindle. Responsible for microtubule translocation. May be important for the organization of phragmoplast-specific arrays of microtubules. Plays an essential role in stabilizing the mitotic spindle. Required during mitotic cytokinesis. The chain is Kinesin-like protein KIN-5A from Arabidopsis thaliana (Mouse-ear cress).